The following is a 340-amino-acid chain: DNA-directed RNA polymerase subunit alpha (340 aa).

The alpha N-terminal domain (alpha-NTD) stretch occupies residues 1 to 233 (MIQDEIPIPV…DLFIIFLNME (233 aa)). The tract at residues 264-340 (AKEVAFKQIF…QLPKDQFNIS (77 aa)) is alpha C-terminal domain (alpha-CTD).

Belongs to the RNA polymerase alpha chain family. In plastids the minimal PEP RNA polymerase catalytic core is composed of four subunits: alpha, beta, beta', and beta''. When a (nuclear-encoded) sigma factor is associated with the core the holoenzyme is formed, which can initiate transcription.

It is found in the plastid. The protein resides in the chloroplast. The enzyme catalyses RNA(n) + a ribonucleoside 5'-triphosphate = RNA(n+1) + diphosphate. Functionally, DNA-dependent RNA polymerase catalyzes the transcription of DNA into RNA using the four ribonucleoside triphosphates as substrates. The protein is DNA-directed RNA polymerase subunit alpha of Psilotum nudum (Whisk fern).